The following is a 251-amino-acid chain: Lactose phosphotransferase system repressor (251 aa).

Positions 3 to 58 (KHERLDEIAKLVNKKGTIRTNEIVEGLNVSDMTVRRDLIELENKGILTKIHGGARS) constitute an HTH deoR-type domain. The segment at residues 20–39 (IRTNEIVEGLNVSDMTVRRD) is a DNA-binding region (H-T-H motif).

In terms of biological role, repressor of the lactose catabolism operon. Galactose-6-phosphate is the inducer. This chain is Lactose phosphotransferase system repressor (lacR), found in Staphylococcus aureus (strain N315).